A 210-amino-acid chain; its full sequence is Secreted isochorismatase effector Isc1 (210 aa).

Catalysis depends on residues D25, K90, and C124.

It belongs to the isochorismatase family.

It localises to the secreted. It is found in the host cytoplasm. Its subcellular location is the host nucleus. It carries out the reaction isochorismate + H2O = (2S,3S)-2,3-dihydroxy-2,3-dihydrobenzoate + pyruvate. Its function is as follows. Secreted isochorismatase required for full virulence of P.sojae. Suppresses salicylate-mediated innate immunity of the host by disrupting the plant salicylate metabolism pathway via hydrolysis of its isochorismate precursor. The polypeptide is Secreted isochorismatase effector Isc1 (Phytophthora sojae (strain P6497) (Soybean stem and root rot agent)).